A 475-amino-acid chain; its full sequence is Tesmin (475 aa).

S34 and S67 each carry phosphoserine. Residues 263 to 372 (SGPALQGPPK…KCIACKNYEE (110 aa)) form the CRC domain.

It belongs to the lin-54 family.

It localises to the cytoplasm. It is found in the nucleus. In terms of biological role, may have a role in spermatogenesis. The polypeptide is Tesmin (Rattus norvegicus (Rat)).